Consider the following 866-residue polypeptide: DNA replication licensing factor MCM4 (866 aa).

Disordered regions lie at residues 1–67, 81–107, and 124–145; these read MSSP…TSPA, SPLN…TPLR, and GGGS…PVSE. Polar residues-rich tracts occupy residues 47-63 and 81-93; these read DNIS…SLPA and SPLN…SMGS. Phosphoserine occurs at positions 55 and 81. Thr-87 carries the post-translational modification Phosphothreonine. Residues 460–669 form the MCM domain; that stretch reads IYDRLARAIA…FDKRLASHLV (210 aa). 512–519 is a binding site for ATP; sequence GDPGTSKS. The Arginine finger signature appears at 644–647; that stretch reads SRFD.

It belongs to the MCM family. As to quaternary structure, component of the Mcm2-7 complex. The complex forms a toroidal hexameric ring with the proposed subunit order Mcm2-Mcm6-Mcm4-Mcm7-Mcm3-Mcm5. In terms of processing, phosphorylated by the catalytic component of the Dbf4-dependent kinase (DDK) complex Cdc7.

It is found in the nucleus. The catalysed reaction is ATP + H2O = ADP + phosphate + H(+). Functionally, acts as a component of the Mcm2-7 complex (Mcm complex) which is the putative replicative helicase essential for 'once per cell cycle' DNA replication initiation and elongation in eukaryotic cells. The active ATPase sites in the Mcm2-7 ring are formed through the interaction surfaces of two neighboring subunits such that a critical structure of a conserved arginine finger motif is provided in trans relative to the ATP-binding site of the Walker A box of the adjacent subunit. The six ATPase active sites, however, are likely to contribute differentially to the complex helicase activity. Required for DNA replication and cell proliferation. Essential role in mitotic DNA replication but not in endoreplication. This chain is DNA replication licensing factor MCM4 (dpa), found in Drosophila melanogaster (Fruit fly).